A 262-amino-acid chain; its full sequence is Cytochrome c oxidase subunit 3 (262 aa).

Helical transmembrane passes span 13 to 33, 38 to 58, 82 to 102, 134 to 154, 159 to 179, 200 to 220, and 237 to 257; these read PWPLLASFAAFLSTTGGVMYM, GGGLLLAIGQLSLFYVMYVWW, GMLLFILSEIMFFFAFFWAFF, TIILLTSGASVTWAHHAILAG, GIISLAITVLLAVIFTGFQAL, ATGFHGFHVIIGTIFIAVCLF, and AAAWYWHMVDVVWLFLFVCIY.

This sequence belongs to the cytochrome c oxidase subunit 3 family. In terms of assembly, component of the cytochrome c oxidase (complex IV, CIV), a multisubunit enzyme composed of a catalytic core of 3 subunits and several supernumerary subunits. The complex exists as a monomer or a dimer and forms supercomplexes (SCs) in the inner mitochondrial membrane with ubiquinol-cytochrome c oxidoreductase (cytochrome b-c1 complex, complex III, CIII).

Its subcellular location is the mitochondrion inner membrane. The enzyme catalyses 4 Fe(II)-[cytochrome c] + O2 + 8 H(+)(in) = 4 Fe(III)-[cytochrome c] + 2 H2O + 4 H(+)(out). In terms of biological role, component of the cytochrome c oxidase, the last enzyme in the mitochondrial electron transport chain which drives oxidative phosphorylation. The respiratory chain contains 3 multisubunit complexes succinate dehydrogenase (complex II, CII), ubiquinol-cytochrome c oxidoreductase (cytochrome b-c1 complex, complex III, CIII) and cytochrome c oxidase (complex IV, CIV), that cooperate to transfer electrons derived from NADH and succinate to molecular oxygen, creating an electrochemical gradient over the inner membrane that drives transmembrane transport and the ATP synthase. Cytochrome c oxidase is the component of the respiratory chain that catalyzes the reduction of oxygen to water. Electrons originating from reduced cytochrome c in the intermembrane space (IMS) are transferred via the dinuclear copper A center (CU(A)) of subunit 2 and heme A of subunit 1 to the active site in subunit 1, a binuclear center (BNC) formed by heme A3 and copper B (CU(B)). The BNC reduces molecular oxygen to 2 water molecules using 4 electrons from cytochrome c in the IMS and 4 protons from the mitochondrial matrix. In Prototheca wickerhamii, this protein is Cytochrome c oxidase subunit 3 (COX3).